Consider the following 796-residue polypeptide: Nuclear cap-binding protein subunit 1 (796 aa).

A disordered region spans residues M1 to E26. Residues E28–K240 enclose the MIF4G domain. Positions L641 to I719 form a coiled coil. The segment at D664 to E695 is disordered. Acidic residues predominate over residues G678 to E695.

It belongs to the NCBP1 family. Component of the nuclear cap-binding complex (CBC), a heterodimer composed of ncbp1/cbp80 and ncbp2/cbp20 that interacts with m7GpppG-capped RNA. Component of an alternative nuclear cap-binding complex (CBC) composed of ncbp1/cbp80 and ncbp3.

The protein localises to the nucleus. It localises to the cytoplasm. Functionally, component of the cap-binding complex (CBC), which binds cotranscriptionally to the 5'-cap of pre-mRNAs and is involved in various processes such as pre-mRNA splicing, translation regulation, nonsense-mediated mRNA decay, RNA-mediated gene silencing (RNAi) by microRNAs (miRNAs) and mRNA export. The CBC complex is involved in mRNA export from the nucleus, leading to the recruitment of the mRNA export machinery to the 5'-end of mRNA and to mRNA export in a 5' to 3' direction through the nuclear pore. The CBC complex is also involved in mediating U snRNA and intronless mRNAs export from the nucleus. The CBC complex is essential for a pioneer round of mRNA translation, before steady state translation when the CBC complex is replaced by cytoplasmic cap-binding protein eIF4E. The pioneer round of mRNA translation mediated by the CBC complex plays a central role in nonsense-mediated mRNA decay (NMD), NMD only taking place in mRNAs bound to the CBC complex, but not on eIF4E-bound mRNAs. The CBC complex enhances NMD in mRNAs containing at least one exon-junction complex (EJC), promoting the interaction between UPF1 and UPF2. The CBC complex is also involved in 'failsafe' NMD, which is independent of the EJC complex, while it does not participate in Staufen-mediated mRNA decay (SMD). During cell proliferation, the CBC complex is also involved in microRNAs (miRNAs) biogenesis via its interaction with SRRT/ARS2 and is required for miRNA-mediated RNA interference. The CBC complex also acts as a negative regulator of parn, thereby acting as an inhibitor of mRNA deadenylation. In the CBC complex, ncbp1/cbp80 does not bind directly capped RNAs (m7GpppG-capped RNA) but is required to stabilize the movement of the N-terminal loop of ncbp2/cbp20 and lock the CBC into a high affinity cap-binding state with the cap structure. Associates with NCBP3 to form an alternative cap-binding complex (CBC) which plays a key role in mRNA export. The conventional CBC with NCBP2 binds both small nuclear RNA (snRNA) and messenger (mRNA) and is involved in their export from the nucleus whereas the alternative CBC with NCBP3 does not bind snRNA and associates only with mRNA thereby playing a role only in mRNA export. The sequence is that of Nuclear cap-binding protein subunit 1 (ncbp1) from Salmo salar (Atlantic salmon).